We begin with the raw amino-acid sequence, 349 residues long: MIINSLKRFGITTGAAASAAAKAAVMGLLNREKRNTVVIPTPIGLRLEIPVEKVEIDSGIACAEVKKFSGDNPDILDGLVIRCCAKLNESNEIVIVGEKGVGKVTRSGLKATMGETAISPTVRDMVINAIREVTDKGIQITIEVPNGDIIAENTLNKMVGIVGGISILGTTGIETPVSDDDYLEHIKCELNVIRQSYDFVVIAPGNSAAKYASKLFDSNSIIKVGDRIGDSIKLASSVFRKVILAGLPAKLLKVYAGIFNTHYSQGDARLESLTHASVLAGLPYDVLTKITNALSVEEAFTYMTKEQRRKVMKIVAEKILSRIKSFNGDINFCVIIFDYDGESLSRVGC.

It belongs to the CbiD family.

The enzyme catalyses Co-precorrin-5B + S-adenosyl-L-methionine = Co-precorrin-6A + S-adenosyl-L-homocysteine. It functions in the pathway cofactor biosynthesis; adenosylcobalamin biosynthesis; cob(II)yrinate a,c-diamide from sirohydrochlorin (anaerobic route): step 6/10. In terms of biological role, catalyzes the methylation of C-1 in cobalt-precorrin-5B to form cobalt-precorrin-6A. The chain is Cobalt-precorrin-5B C(1)-methyltransferase from Saccharolobus islandicus (strain Y.N.15.51 / Yellowstone #2) (Sulfolobus islandicus).